The primary structure comprises 417 residues: NADH-quinone oxidoreductase subunit D (417 aa).

The protein belongs to the complex I 49 kDa subunit family. NDH-1 is composed of 14 different subunits. Subunits NuoB, C, D, E, F, and G constitute the peripheral sector of the complex.

It is found in the cell inner membrane. The enzyme catalyses a quinone + NADH + 5 H(+)(in) = a quinol + NAD(+) + 4 H(+)(out). NDH-1 shuttles electrons from NADH, via FMN and iron-sulfur (Fe-S) centers, to quinones in the respiratory chain. The immediate electron acceptor for the enzyme in this species is believed to be ubiquinone. Couples the redox reaction to proton translocation (for every two electrons transferred, four hydrogen ions are translocated across the cytoplasmic membrane), and thus conserves the redox energy in a proton gradient. The chain is NADH-quinone oxidoreductase subunit D from Cupriavidus metallidurans (strain ATCC 43123 / DSM 2839 / NBRC 102507 / CH34) (Ralstonia metallidurans).